The chain runs to 172 residues: Crossover junction endodeoxyribonuclease RuvC (172 aa).

Residues Asp12, Glu71, and Asp143 contribute to the active site. Mg(2+)-binding residues include Asp12, Glu71, and Asp143.

It belongs to the RuvC family. In terms of assembly, homodimer which binds Holliday junction (HJ) DNA. The HJ becomes 2-fold symmetrical on binding to RuvC with unstacked arms; it has a different conformation from HJ DNA in complex with RuvA. In the full resolvosome a probable DNA-RuvA(4)-RuvB(12)-RuvC(2) complex forms which resolves the HJ. It depends on Mg(2+) as a cofactor.

It localises to the cytoplasm. The enzyme catalyses Endonucleolytic cleavage at a junction such as a reciprocal single-stranded crossover between two homologous DNA duplexes (Holliday junction).. Its function is as follows. The RuvA-RuvB-RuvC complex processes Holliday junction (HJ) DNA during genetic recombination and DNA repair. Endonuclease that resolves HJ intermediates. Cleaves cruciform DNA by making single-stranded nicks across the HJ at symmetrical positions within the homologous arms, yielding a 5'-phosphate and a 3'-hydroxyl group; requires a central core of homology in the junction. The consensus cleavage sequence is 5'-(A/T)TT(C/G)-3'. Cleavage occurs on the 3'-side of the TT dinucleotide at the point of strand exchange. HJ branch migration catalyzed by RuvA-RuvB allows RuvC to scan DNA until it finds its consensus sequence, where it cleaves and resolves the cruciform DNA. The polypeptide is Crossover junction endodeoxyribonuclease RuvC (Coxiella burnetii (strain CbuK_Q154) (Coxiella burnetii (strain Q154))).